Here is a 307-residue protein sequence, read N- to C-terminus: tRNA pseudouridine synthase B (307 aa).

Asp-38 (nucleophile) is an active-site residue.

Belongs to the pseudouridine synthase TruB family. Type 1 subfamily.

It carries out the reaction uridine(55) in tRNA = pseudouridine(55) in tRNA. Its function is as follows. Responsible for synthesis of pseudouridine from uracil-55 in the psi GC loop of transfer RNAs. The sequence is that of tRNA pseudouridine synthase B from Bacillus anthracis.